Consider the following 277-residue polypeptide: Putative phosphoenolpyruvate synthase regulatory protein (277 aa).

ADP is bound at residue 157-164 (GVSRSGKT).

It belongs to the pyruvate, phosphate/water dikinase regulatory protein family. PSRP subfamily.

It catalyses the reaction [pyruvate, water dikinase] + ADP = [pyruvate, water dikinase]-phosphate + AMP + H(+). It carries out the reaction [pyruvate, water dikinase]-phosphate + phosphate + H(+) = [pyruvate, water dikinase] + diphosphate. In terms of biological role, bifunctional serine/threonine kinase and phosphorylase involved in the regulation of the phosphoenolpyruvate synthase (PEPS) by catalyzing its phosphorylation/dephosphorylation. The chain is Putative phosphoenolpyruvate synthase regulatory protein from Vibrio vulnificus (strain CMCP6).